Consider the following 600-residue polypeptide: ATP-dependent lipid A-core flippase (600 aa).

The next 4 membrane-spanning stretches (helical) occupy residues 26–46, 82–102, 167–187, and 266–286; these read VGIF…QPML, LLIV…NYFL, VFLF…MLAI, and PMLQ…VLFL. In terms of domain architecture, ABC transmembrane type-1 spans 30–321; the sequence is LLSIIGFVIF…LSEVSSTIQK (292 aa). The ABC transporter domain occupies 353–589; that stretch reads LEVKNLSFFY…NGYYARLHAM (237 aa). 387 to 394 contacts ATP; it reads GRSGSGKS.

The protein belongs to the ABC transporter superfamily. Lipid exporter (TC 3.A.1.106) family. In terms of assembly, homodimer.

It localises to the cell inner membrane. It catalyses the reaction ATP + H2O + lipid A-core oligosaccharideSide 1 = ADP + phosphate + lipid A-core oligosaccharideSide 2.. Functionally, involved in lipopolysaccharide (LPS) biosynthesis. Translocates lipid A-core from the inner to the outer leaflet of the inner membrane. Transmembrane domains (TMD) form a pore in the inner membrane and the ATP-binding domain (NBD) is responsible for energy generation. The sequence is that of ATP-dependent lipid A-core flippase from Pseudomonas savastanoi pv. phaseolicola (strain 1448A / Race 6) (Pseudomonas syringae pv. phaseolicola (strain 1448A / Race 6)).